The chain runs to 579 residues: Kelch repeat and BTB domain-containing protein F47D12.7 (579 aa).

The BTB domain occupies 51–119 (PTVTLVLRNN…PKAFEQGIKP (69 aa)). Kelch repeat units follow at residues 266–316 (AIVC…VVED), 317–363 (KLIV…RVND), 369–415 (LVFA…TIDN), 417–463 (IVAI…SIMN), 465–511 (VCMI…QMDT), and 513–559 (YVYV…TLSD).

The protein is Kelch repeat and BTB domain-containing protein F47D12.7 of Caenorhabditis elegans.